Reading from the N-terminus, the 186-residue chain is MKLLAIISASLALAGFTTATPPPQTFSIKAKGNPKVPSARFDASRSNIFLNYGDSGAVCEVKPGCPKPKDAVFYLKDSILYLYTGSSNPVQKVFLDRSGFGQGKIGYLTGDGQLPSRWEVQGWTIDGAGNLKFKGKGLIACPTSDPKIKSWTVWADLGIATPGGNKGCLPFTAHTMKTKPVACKYT.

The first 19 residues, 1 to 19 (MKLLAIISASLALAGFTTA), serve as a signal peptide directing secretion.

This sequence belongs to the phiA family.

It localises to the secreted. Its subcellular location is the cell wall. Cell wall protein involved in development of asexual structures such as phialide and conidium development, and thus required for spore formation. Plays a role as a general stress protectant produced by the fungus in competition with antagonistic bacteria. The polypeptide is Cell wall protein phiA (Arthroderma benhamiae (strain ATCC MYA-4681 / CBS 112371) (Trichophyton mentagrophytes)).